Consider the following 567-residue polypeptide: Interferon lambda receptor 1 (567 aa).

A signal peptide spans 1-22; that stretch reads MSAWRIRVLATLCFLWQPRVHG. The Extracellular portion of the chain corresponds to 23–229; that stretch reads QLPPPQNVTL…YEGEWKFPFS (207 aa). Residues 26 to 121 form the Fibronectin type-III domain; sequence PPQNVTLLSK…KSQFKEYHLD (96 aa). Residue N29 is glycosylated (N-linked (GlcNAc...) asparagine). 3 cysteine pairs are disulfide-bonded: C74–C82, C86–C149, and C193–C215. An N-linked (GlcNAc...) asparagine glycan is attached at N141. A helical transmembrane segment spans residues 230 to 250; the sequence is ATIPVFVLLILLTSASIIWLL. Topologically, residues 251–567 are cytoplasmic; sequence KQDAKHKKMP…YQHSHYMRRS (317 aa).

Belongs to the type II cytokine receptor family. As to quaternary structure, heterodimer with IL10RB.

Its subcellular location is the membrane. The IFNLR1/IL10RB dimer is a receptor for the cytokine ligands IFNL2 and IFNL3 and mediates their antiviral activity. The ligand/receptor complex stimulate the activation of the JAK/STAT signaling pathway leading to the expression of IFN-stimulated genes (ISG), which contribute to the antiviral state. Determines the cell type specificity of the lambda interferon action. Shows a more restricted pattern of expression in the epithelial tissues thereby limiting responses to lambda interferons primarily to epithelial cells of the respiratory, gastrointestinal, and reproductive tracts. This Gallus gallus (Chicken) protein is Interferon lambda receptor 1 (IFNLR1).